A 114-amino-acid chain; its full sequence is Beta-microseminoprotein (114 aa).

The N-terminal stretch at 1 to 20 (MNVLLGSVVIFATFVTLCNA) is a signal peptide. Cystine bridges form between Cys-22-Cys-70, Cys-38-Cys-62, Cys-57-Cys-93, Cys-60-Cys-69, and Cys-84-Cys-107.

Belongs to the beta-microseminoprotein family. In terms of assembly, homodimer; Interacts with PI16. Strongly expressed in prostate, liver, kidney, breast and penis. Also expressed in pancreas, esophagus, stomach, deodenum, colon, trachea, lung, salivary glands and fallopian tube. PSP94 is expressed in lung and breast, whereas PSP57 is found in kidney and bladder.

It localises to the secreted. The sequence is that of Beta-microseminoprotein (MSMB) from Homo sapiens (Human).